The chain runs to 575 residues: Phosphoenolpyruvate-protein phosphotransferase (575 aa).

Position 122 is a phosphotyrosine (tyrosine 122). Catalysis depends on histidine 189, which acts as the Tele-phosphohistidine intermediate. Residues arginine 296 and arginine 332 each contribute to the phosphoenolpyruvate site. Mg(2+) contacts are provided by glutamate 431 and aspartate 455. Phosphoenolpyruvate-binding positions include 454–455 and arginine 465; that span reads ND. Catalysis depends on cysteine 502, which acts as the Proton donor.

It belongs to the PEP-utilizing enzyme family. As to quaternary structure, homodimer. Interacts with the pole-localizer protein TmaR. Binding to TmaR is reversible as long as TmaR can get phosphorylated, whereas binding to non-phosphorylated TmaR is very strong and shifts the equilibrium toward binding. Mg(2+) serves as cofactor. In terms of processing, phosphorylated on Tyr-122. Phosphorylation on Tyr-122 is important for polar localization but not for interaction with TmaR and for activity.

The protein resides in the cytoplasm. It catalyses the reaction L-histidyl-[protein] + phosphoenolpyruvate = N(pros)-phospho-L-histidyl-[protein] + pyruvate. With respect to regulation, inhibited by oxalate. Its function is as follows. General (non sugar-specific) component of the phosphoenolpyruvate-dependent sugar phosphotransferase system (sugar PTS). This major carbohydrate active-transport system catalyzes the phosphorylation of incoming sugar substrates concomitantly with their translocation across the cell membrane. Enzyme I transfers the phosphoryl group from phosphoenolpyruvate (PEP) to the phosphoryl carrier protein (HPr). Can also use (Z)-3-fluoro-PEP (ZFPEP), (Z)-3-methyl-PEP (ZMePEP), (Z)-3-chloro-PEP (ZClPEP) and (E)-3-chloro-PEP (EClPEP) as alternative phosphoryl donors. The protein is Phosphoenolpyruvate-protein phosphotransferase of Escherichia coli (strain K12).